Reading from the N-terminus, the 671-residue chain is MRPKRLGRCCAGSRLGPGDPAALTCAPSPSASPAPEPSAQPQARGTGQRVGSRATSGSQFLSEARTGARPASEAGAKAGARRPSAFSAIQGDVRSMPDNSDAPWTRFVFQGPFGSRATGRGTGKAAGIWKTPAAYVGRRPGVSGPERAAFIRELEEALCPNLPPPVKKITQEDVKVMLYLLEELLPPVWESVTYGMVLQRERDLNTAARIGQSLVKQNSVLMEENSKLEALLGSAKEEILYLRHQVNLRDELLQLYSDSDEEDEDEEEEEEEKEAEEEQEEEEAEEDLQCAHPCDAPKLISQEALLHQHHCPQLEALQEKLRLLEEENHQLREEASQLDTLEDEEQMLILECVEQFSEASQQMAELSEVLVLRLENYERQQQEVARLQAQVLKLQQRCRMYGAETEKLQKQLASEKEIQMQLQEESVWVGSQLQDLREKYMDCGGMLIEMQEEVKTLRQQPPVSTGSATHYPYSVPLETLPGFQETLAEELRTSLRRMISDPVYFMERNYEMPRGDTSSLRYDFRYSEDREQVRGFEAEEGLMLAADIMRGEDFTPAEEFVPQEELGAAKKVPAEEGVMEEAELVSEETEGWEEVELELDEATRMNVVTSALEASGLGPSHLDMNYVLQQLANWQDAHYRRQLRWKMLQKGECPHGALPAASRTSCRSSCR.

Disordered stretches follow at residues 1-83 (MRPK…ARRP) and 258-289 (DSDE…EDLQ). The span at 20-29 (PAALTCAPSP) shows a compositional bias: low complexity. The HAP1 N-terminal domain occupies 106 to 461 (RFVFQGPFGS…EEVKTLRQQP (356 aa)). The stretch at 212-427 (QSLVKQNSVL…IQMQLQEESV (216 aa)) forms a coiled coil. Acidic residues predominate over residues 258–288 (DSDEEDEDEEEEEEEKEAEEEQEEEEAEEDL).

Self-associates. Interacts with HTT/huntingtin; enhanced by an expanded polyglutamine repeat within HTT. Interacts with DCTN1; decreased in presence of HTT with expanded polyglutamine repeat. Interacts with KLC2. Interacts with ITPR1 and APP. Interacts with AR; decreased by an expanded polyglutamine repeat within AR. Interacts with YWHAZ. Interacts with BDNF and SORT1; probably forming a complex involved in proBDNF trafficking, degradation and processing. Interacts with TBP, AHI1, HGS and KALRN. Interacts with KIF5A, KIF5B, KIF5C and GABRB3; indicative for an HAP1:KIF5 complex transporting a GABA(A) receptor as cargo. Interacts with ATXN3; in STBs with ATXN3 poly-Gln region with 27 repeats (normal population) and 79 repeats (spinocerebellar ataxia 3 (SCA3) patients) associating in the same strength. Interacts with NTRK2; HAP1 stabilizes association of NTRK2 with SORT1 preventing NTRK2 degradation. Interacts with CFAP263. As to expression, predominantly expressed in brain. Selectively expressed in neurons.

It is found in the cytoplasm. The protein resides in the cell projection. It localises to the axon. The protein localises to the presynapse. Its subcellular location is the cytoskeleton. It is found in the dendritic spine. The protein resides in the dendrite. It localises to the lysosome. The protein localises to the endoplasmic reticulum. Its subcellular location is the mitochondrion. It is found in the nucleus. The protein resides in the cytoplasmic vesicle. It localises to the autophagosome. The protein localises to the early endosome. Its subcellular location is the growth cone. It is found in the neuron projection. The protein resides in the secretory vesicle. It localises to the synaptic vesicle. Its function is as follows. Originally identified as neuronal protein that specifically associates with HTT/huntingtin and the binding is enhanced by an expanded polyglutamine repeat within HTT possibly affecting HAP1 interaction properties. Both HTT and HAP1 are involved in intracellular trafficking and HAP1 is proposed to link HTT to motor proteins and/or transport cargos. Seems to play a role in vesicular transport within neurons and axons such as from early endosomes to late endocytic compartments and to promote neurite outgrowth. The vesicular transport function via association with microtubule-dependent transporters can be attenuated by association with mutant HTT. Involved in the axonal transport of BDNF and its activity-dependent secretion; the function seems to involve HTT, DCTN1 and a complex with SORT1. Involved in APP trafficking and seems to facilitate APP anterograde transport and membrane insertion thereby possibly reducing processing into amyloid beta. Involved in delivery of gamma-aminobutyric acid (GABA(A)) receptors to synapses; the function is dependent on kinesin motor protein KIF5 and is disrupted by HTT with expanded polyglutamine repeat. Involved in regulation of autophagosome motility by promoting efficient retrograde axonal transport. Seems to be involved in regulation of membrane receptor recycling and degradation, and respective signal transduction, including GABA(A) receptors, tyrosine kinase receptors, EGFR, IP3 receptor and androgen receptor. Among others suggested to be involved in control of feeding behavior (involving hypothalamic GABA(A) receptors), cerebellar and brainstem development (involving AHI1 and NTRK1/TrkA), postnatal neurogenesis (involving hypothalamic NTRK2/TrkB), and ITPR1/InsP3R1-mediated Ca(2+) release (involving HTT and possibly the effect of mutant HTT). Via association with DCTN1/dynactin p150-glued and HTT/huntingtin involved in cytoplasmic retention of REST in neurons. May be involved in ciliogenesis. Involved in regulation of exocytosis. Seems to be involved in formation of cytoplasmic inclusion bodies (STBs). In case of anomalous expression of TBP, can sequester a subset of TBP into STBs; sequestration is enhanced by an expanded polyglutamine repeat within TBP. HAP1-containing STBs have been proposed to play a protective role against neurodegeneration in Huntigton disease (HD) and spinocerebellar ataxia 17 (SCA17). This Homo sapiens (Human) protein is Huntingtin-associated protein 1 (HAP1).